The sequence spans 442 residues: MKMPKNNVYTVSRLNGEVRQLLEGELGKVWLEAEISNFSAPSSGHWYLTLKDNYAQIRAAMFKGRNRAVTFRPANGQQVLVKGAISVYEPRGDYQLIIDSMLPAGDGLLAQQYEALKMKLAAEGLFAADTKRPLPSNIQRIGVVTSATGAAIRDVLHVLKRRDPSIEVIIYPSQVQGEHADKSLCHAIMQANDRMEVDVLLLTRGGGSLEDLWCFNSEALAHTIYNSALPVVSAVGHEVDTTISDYVADLRAPTPSAAAELLSQDALSKADKLRMTMTRLKQGWQHYGLKQAQRFSQLHHRLERQDPKRRLQQYEQRFDELQLRLGAALTGKLHQMERRQQSLHARLNQVSPSHQLALAASRLTHQNQRLHSAMQARLNSAEKSLQYAAHQLETVSPLATLSRGYSITLDTEGKVLHSAQDVRTGARLTTKLVDGEVQSTVI.

This sequence belongs to the XseA family. In terms of assembly, heterooligomer composed of large and small subunits.

The protein localises to the cytoplasm. It carries out the reaction Exonucleolytic cleavage in either 5'- to 3'- or 3'- to 5'-direction to yield nucleoside 5'-phosphates.. Functionally, bidirectionally degrades single-stranded DNA into large acid-insoluble oligonucleotides, which are then degraded further into small acid-soluble oligonucleotides. The polypeptide is Exodeoxyribonuclease 7 large subunit (Shewanella loihica (strain ATCC BAA-1088 / PV-4)).